The following is a 669-amino-acid chain: Glycine--tRNA ligase beta subunit (669 aa).

The protein belongs to the class-II aminoacyl-tRNA synthetase family. As to quaternary structure, tetramer of two alpha and two beta subunits.

The protein resides in the cytoplasm. The enzyme catalyses tRNA(Gly) + glycine + ATP = glycyl-tRNA(Gly) + AMP + diphosphate. The polypeptide is Glycine--tRNA ligase beta subunit (Phenylobacterium zucineum (strain HLK1)).